We begin with the raw amino-acid sequence, 89 residues long: Small ribosomal subunit protein bS20 (89 aa).

The segment covering methionine 1–histidine 10 has biased composition (basic residues). The segment at methionine 1–threonine 30 is disordered. Over residues asparagine 11–threonine 30 the composition is skewed to basic and acidic residues.

This sequence belongs to the bacterial ribosomal protein bS20 family.

In terms of biological role, binds directly to 16S ribosomal RNA. The chain is Small ribosomal subunit protein bS20 from Treponema denticola (strain ATCC 35405 / DSM 14222 / CIP 103919 / JCM 8153 / KCTC 15104).